An 89-amino-acid chain; its full sequence is Large ribosomal subunit protein uL23cz/uL23cy (89 aa).

This sequence belongs to the universal ribosomal protein uL23 family. As to quaternary structure, part of the 50S ribosomal subunit.

The protein localises to the plastid. It localises to the chloroplast. In terms of biological role, binds to 23S rRNA. In Calycanthus floridus var. glaucus (Eastern sweetshrub), this protein is Large ribosomal subunit protein uL23cz/uL23cy (rpl23-A).